The sequence spans 68 residues: Conotoxin Eb11.7 (68 aa).

An N-terminal signal peptide occupies residues M1–T26. 4 cysteine pairs are disulfide-bonded: C29-C43, C36-C48, C42-C52, and C47-C56. The residue at position 60 (F60) is a Phenylalanine amide. Residues A64–E68 constitute a propeptide that is removed on maturation.

This sequence belongs to the conotoxin I2 superfamily. As to expression, expressed by the venom duct.

It localises to the secreted. This is Conotoxin Eb11.7 from Conus eburneus (Ivory cone).